The primary structure comprises 365 residues: Membrane cofactor protein (365 aa).

Positions 1–44 (MTAAPLMPDSTHPCRRRKSYTFFWCSLGVYAEALLFLLSHLSDA) are cleaved as a signal peptide. Sushi domains are found at residues 45–106 (CELP…GCIK), 107–170 (VQCT…HCEK), 171–236 (IYCL…ECKV), and 237–296 (VKCP…KCLK). The Extracellular segment spans residues 45-329 (CELPRPFEAM…GIFSQELDAW (285 aa)). 6 disulfides stabilise this stretch: Cys109-Cys151, Cys137-Cys168, Cys173-Cys221, Cys202-Cys234, Cys239-Cys281, and Cys267-Cys294. N-linked (GlcNAc...) asparagine glycosylation is present at Asn181. Thr205 carries O-linked (GalNAc...) threonine glycosylation. O-linked (GalNAc...) threonine glycosylation is found at Thr301 and Thr304. Asn310 carries N-linked (GlcNAc...) asparagine glycosylation. Thr312 carries an O-linked (GalNAc...) threonine glycan. The helical transmembrane segment at 330 to 350 (IIALIVITSIVGVFILCLIVL) threads the bilayer. Over 351–365 (RCFEHRKKTNVSAAR) the chain is Cytoplasmic.

In terms of assembly, interacts with C3b. Interacts with C4b. Interacts with moesin/MSN. Post-translationally, may be O-glycosylated. In terms of processing, N-glycosylated. As to expression, present only in testis (at protein level).

The protein resides in the cytoplasmic vesicle. It localises to the secretory vesicle. The protein localises to the acrosome inner membrane. It is found in the secreted. In terms of biological role, may be involved in the fusion of the spermatozoa with the oocyte during fertilization. The chain is Membrane cofactor protein (Cd46) from Mus musculus (Mouse).